Here is a 490-residue protein sequence, read N- to C-terminus: NADP-reducing hydrogenase subunit HndC (490 aa).

4Fe-4S ferredoxin-type domains are found at residues 433–462 (LTYT…GTKK) and 463–490 (QPHT…IIKQ).

It belongs to the complex I 51 kDa subunit family. As to quaternary structure, heterotetramer composed of HndA, HndB, HndC and HndD subunits. HndC is probably the reducing subunit.

It catalyses the reaction H2 + NADP(+) = NADPH + H(+). With respect to regulation, inhibited by oxygen. Functionally, catalyzes the reduction of NADP in the presence of molecular H2 to yield NADPH. The sequence is that of NADP-reducing hydrogenase subunit HndC (hndC) from Solidesulfovibrio fructosivorans (Desulfovibrio fructosivorans).